The primary structure comprises 112 residues: UPF0102 protein TTHA0372 (112 aa).

The protein belongs to the UPF0102 family.

The sequence is that of UPF0102 protein TTHA0372 from Thermus thermophilus (strain ATCC 27634 / DSM 579 / HB8).